The primary structure comprises 311 residues: Probable cell division protein WhiA (311 aa).

The segment at residues 277–311 is a DNA-binding region (H-T-H motif); it reads TLKEVADQIPDGPISKSGVNHRFKKLHEIAESLRE.

It belongs to the WhiA family.

Involved in cell division and chromosome segregation. The protein is Probable cell division protein WhiA of Lactobacillus acidophilus (strain ATCC 700396 / NCK56 / N2 / NCFM).